Here is a 1083-residue protein sequence, read N- to C-terminus: MPTNFTVVPVEARADGAGDEAAERTEEPESPESVDQTSPTPGDGNPRENSPFINNVEVERESYFEGKNMALFEEEMDSNPMVSSLLNKLANYTNLSQGVVEHEEDEDSRRREVKAPRMGTFIGVYLPCLQNILGVILFLRLTWIVGAAGVMESFLIVAMCCTCTMLTAISMSAIATNGVVPAGGSYYMISRSLGPEFGGAVGLCFYLGTTFAGAMYILGTIEIFLTYISPSAAIFQAETADGEAAALLNNMRVYGSCALALMAVVVFVGVKYVNKLALVFLACVVLSILAIYAGVIKTAFAPPDIPVCLLGNRTLANRNFDTCAKMQVVSNGTVTTALWRLFCNGSSLGATCDEYFAQNNVTEIQGIPGVASGVFLDNLWSTYSDKGAFVEKKGVSSVPVSEESRPGGLPYVLTDIMTYFTMLVGIYFPSVTGIMAGSNRSGDLKDAQKSIPTGTILAIVTTSFIYLSCIVLFGACIEGVVLRDKFGEALQGNLVIGMLAWPSPWVIVIGSFFSTCGAGLQSLTGAPRLLQAIARDGIIPFLQVFGHGKANGEPTWALLLTALICETGILIASLDSVAPILSMFFLMCYMFVNLACAVQTLLRTPNWRPRFKFYHWTLSFLGMSLCLALMFICSWYYALFAMLIAGCIYKYIEYRGAEKEWGDGIRGLSLNAARYALLRVEHGPPHTKNWRPQVLVMLNLDSEQCVKHPRLLSFTSQLKAGKGLTIVGSVLEGTYLDKHVEAQRAEENIRSLMSAEKTKGFCQLVVSSNLRDGASHLIQSAGLGGMKHNTVLMAWPEAWKEADNPFSWKNFVDTVRDTTAAHQALLVAKNIDLFPQNQERFSDGNIDVWWIVHDGGMLMLLPFLLRQHKVWRKCRMRIFTVAQVDDNSIQMKKDLQMFLYHLRISAEVEVVEMVENDISAFTYEKTLMMEQRSQMLKQMQLSKNEREREAQLIHDRNTASHTTATARTQAPPTPDKVQMTWTKEKLIAEKHRNKDTGPSGFKDLFSLKPDQSNVRRMHTAVKLNGVVLNKSQDAQLVLLNMPGPPKSRQGDENYMEFLEVLTEGLNRVLLVRGGGREVITIYS.

The tract at residues 1 to 55 (MPTNFTVVPVEARADGAGDEAAERTEEPESPESVDQTSPTPGDGNPRENSPFINN) is disordered. Residues 1–119 (MPTNFTVVPV…RREVKAPRMG (119 aa)) lie on the Cytoplasmic side of the membrane. Over residues 12-27 (ARADGAGDEAAERTEE) the composition is skewed to basic and acidic residues. Ser-30 and Ser-33 each carry phosphoserine. A Phosphothreonine modification is found at Thr-37. Phosphoserine is present on residues Ser-50 and Ser-62. Residues 120 to 142 (TFIGVYLPCLQNILGVILFLRLT) traverse the membrane as a discontinuously helical segment. K(+)-binding residues include Asn-131 and Ile-132. Chloride is bound at residue Val-135. Residues 143–149 (WIVGAAG) are Extracellular-facing. The chain crosses the membrane as a helical span at residues 150–172 (VMESFLIVAMCCTCTMLTAISMS). The Cytoplasmic segment spans residues 173-196 (AIATNGVVPAGGSYYMISRSLGPE). Residues 197-225 (FGGAVGLCFYLGTTFAGAMYILGTIEIFL) traverse the membrane as a helical segment. Over 226-249 (TYISPSAAIFQAETADGEAAALLN) the chain is Extracellular. Helical transmembrane passes span 250-271 (NMRVYGSCALALMAVVVFVGVK) and 272-300 (YVNKLALVFLACVVLSILAIYAGVIKTAF). The Extracellular segment spans residues 301–419 (APPDIPVCLL…PYVLTDIMTY (119 aa)). Asn-312 carries N-linked (GlcNAc...) (high mannose) asparagine glycosylation. 2 N-linked (GlcNAc...) (complex) asparagine glycosylation sites follow: Asn-331 and Asn-344. Residue Asn-360 is glycosylated (N-linked (GlcNAc...) (high mannose) asparagine). The chain crosses the membrane as a helical span at residues 420 to 440 (FTMLVGIYFPSVTGIMAGSNR). K(+)-binding residues include Pro-429 and Thr-432. Residue Pro-429 participates in chloride binding. Chloride contacts are provided by Gly-433 and Ile-434. The Cytoplasmic segment spans residues 441–450 (SGDLKDAQKS). Residues 451-473 (IPTGTILAIVTTSFIYLSCIVLF) form a helical membrane-spanning segment. Residues 474-504 (GACIEGVVLRDKFGEALQGNLVIGMLAWPSP) are Extracellular-facing. Residues 505–531 (WVIVIGSFFSTCGAGLQSLTGAPRLLQ) traverse the membrane as a helical segment. The Cytoplasmic segment spans residues 532–554 (AIARDGIIPFLQVFGHGKANGEP). Helical transmembrane passes span 555-573 (TWALLLTALICETGILIAS) and 574-598 (LDSVAPILSMFFLMCYMFVNLACAV). Residue Tyr-589 coordinates chloride. The Cytoplasmic segment spans residues 599–612 (QTLLRTPNWRPRFK). 2 consecutive transmembrane segments (helical) span residues 613–635 (FYHWTLSFLGMSLCLALMFICSW) and 636–651 (YYALFAMLIAGCIYKY). Topologically, residues 652-1083 (IEYRGAEKEW…GGREVITIYS (432 aa)) are cytoplasmic. The scissor helix stretch occupies residues 664 to 680 (GIRGLSLNAARYALLRV). Phosphothreonine is present on residues Thr-973 and Thr-980.

Belongs to the SLC12A transporter family. K/Cl co-transporter subfamily. In terms of assembly, homodimer; adopts a domain-swap conformation at the scissor helices connecting the transmembrane domain and C-terminal domain. Heterodimer with K-Cl cotransporter SLC12A5. Post-translationally, glycosylation at Asn-331 and Asn-344 is required for proper trafficking to the cell surface, and augments protein stability. In terms of tissue distribution, detected in proximal tubules in the kidney, in particular in basolateral membranes of intercalated cells in the cortical collecting duct.

It localises to the cell membrane. The catalysed reaction is K(+)(in) + chloride(in) = K(+)(out) + chloride(out). Activated by N-ethylmaleimide (NEM). Inhibited by furosemide, DIDS and bumetanide. The inhibition is much stronger in the presence of 50 mM K(+) in the uptake medium. Inhibited by DIOA. Inhibited by WNK3. Functionally, mediates electroneutral potassium-chloride cotransport when activated by cell swelling. May mediate K(+) uptake into Deiters' cells in the cochlea and contribute to K(+) recycling in the inner ear. Important for the survival of cochlear outer and inner hair cells and the maintenance of the organ of Corti. May be required for basolateral Cl(-) extrusion in the kidney and contribute to renal acidification. The chain is Solute carrier family 12 member 7 (Slc12a7) from Mus musculus (Mouse).